A 295-amino-acid chain; its full sequence is Glutamyl-Q tRNA(Asp) synthetase (295 aa).

Residues 9–13 and glutamate 45 contribute to the L-glutamate site; that span reads RFAPT. Positions 12–22 match the 'HIGH' region motif; the sequence is PTPSGYLHFGS. 4 residues coordinate Zn(2+): cysteine 101, cysteine 103, tyrosine 115, and cysteine 119. Tyrosine 172 and arginine 190 together coordinate L-glutamate. The 'KMSKS' region signature appears at 228–232; it reads KLGKS. ATP is bound at residue lysine 231.

This sequence belongs to the class-I aminoacyl-tRNA synthetase family. GluQ subfamily. It depends on Zn(2+) as a cofactor.

Its function is as follows. Catalyzes the tRNA-independent activation of glutamate in presence of ATP and the subsequent transfer of glutamate onto a tRNA(Asp). Glutamate is transferred on the 2-amino-5-(4,5-dihydroxy-2-cyclopenten-1-yl) moiety of the queuosine in the wobble position of the QUC anticodon. The polypeptide is Glutamyl-Q tRNA(Asp) synthetase (Pseudomonas syringae pv. syringae (strain B728a)).